The primary structure comprises 1365 residues: Homeotic protein spalt-major (1365 aa).

Disordered stretches follow at residues 47–194 (SADK…EVTL), 270–298 (QAKQ…EEEE), and 322–363 (LINA…NTHK). 2 stretches are compositionally biased toward low complexity: residues 63 to 76 (SPLT…SPSR) and 87 to 99 (EQST…PEQS). Over residues 103-117 (HQLENDIKSEAKSEI) the composition is skewed to basic and acidic residues. Over residues 146-157 (PSSPVAEASAEE) the composition is skewed to low complexity. Basic and acidic residues predominate over residues 159–181 (ATERTPEKEKEKDVEVDVEKPDE). Residues 275–298 (EDTEEDADQEQDQEQETDTYEEEE) are compositionally biased toward acidic residues. The span at 346–363 (HDHESQPNRRPSLDNTHK) shows a compositional bias: basic and acidic residues. 2 C2H2-type zinc fingers span residues 451–473 (HRCR…IRSH) and 479–501 (FKCN…FQRH). Disordered stretches follow at residues 508-554 (VPMN…ASFP) and 586-716 (ELPT…TPGQ). Residues 530-539 (MSPTDSSPNH) show a composition bias toward polar residues. Over residues 540 to 554 (SPAPPPLGSAPASFP) the composition is skewed to pro residues. Basic and acidic residues-rich tracts occupy residues 603–622 (PQVK…HEQE) and 638–662 (VRIK…EPRR). 2 positions are modified to phosphoserine: Ser739 and Ser744. The segment at 740–772 (PEHHSPVRSPAGGALPPGVPPPPHHHPHHMARS) is disordered. 3 consecutive C2H2-type zinc fingers follow at residues 824 to 846 (NQCV…YRTH), 852 to 874 (FKCR…MAVH), and 884 to 906 (HQCP…IRLH). Disordered stretches follow at residues 948–1012 (ALPG…RSGD), 1030–1129 (VVNT…ILTS), and 1146–1241 (HHLQ…GARP). Acidic residues predominate over residues 976 to 991 (DMDDNMDCGEDYDDDV). Low complexity predominate over residues 1040 to 1054 (SSASSHGHSVGSTSA). Residues 1055–1079 (PTSPSVHASSQVIKRSSSPARSEAS) show a composition bias toward polar residues. A phosphoserine mark is found at Ser1076 and Ser1079. Composition is skewed to low complexity over residues 1085 to 1100 (LTPR…SRSP), 1114 to 1123 (RSPSGSSHAS), and 1146 to 1168 (HHLQ…AAAA). Positions 1181–1191 (QHQEQLRREAA) are enriched in basic and acidic residues. Positions 1192–1218 (EAQQKAAAAAAAAAAAAAAQRQTPPQA) are enriched in low complexity. C2H2-type zinc fingers lie at residues 1289-1311 (TTCG…YRSH) and 1317-1339 (FKCS…MLTH).

This sequence belongs to the sal C2H2-type zinc-finger protein family.

It localises to the nucleus. Functionally, required for the establishment of the posterior-most head and the anterior-most tail segments of the embryo. Probably function as a transcriptional regulator. Could repress the transcription of the tsh gene. In Drosophila melanogaster (Fruit fly), this protein is Homeotic protein spalt-major (salm).